A 206-amino-acid polypeptide reads, in one-letter code: Protein GrpE (206 aa).

This sequence belongs to the GrpE family. Homodimer.

It is found in the cytoplasm. Functionally, participates actively in the response to hyperosmotic and heat shock by preventing the aggregation of stress-denatured proteins, in association with DnaK and GrpE. It is the nucleotide exchange factor for DnaK and may function as a thermosensor. Unfolded proteins bind initially to DnaJ; upon interaction with the DnaJ-bound protein, DnaK hydrolyzes its bound ATP, resulting in the formation of a stable complex. GrpE releases ADP from DnaK; ATP binding to DnaK triggers the release of the substrate protein, thus completing the reaction cycle. Several rounds of ATP-dependent interactions between DnaJ, DnaK and GrpE are required for fully efficient folding. The polypeptide is Protein GrpE (Shewanella sp. (strain W3-18-1)).